The following is a 506-amino-acid chain: Transcription factor CP2 (506 aa).

A Grh/CP2 DB domain is found at 61–300 (ENKILPFQYV…SPGFNSSHNS (240 aa)). Positions 133-395 (EHQQLEGWRW…LFNALKGRIV (263 aa)) are DNA-binding. 2 disordered regions span residues 238-268 (FKPK…YQPS) and 291-316 (SPGF…QPEP). The span at 241–265 (KGADRKQKTDREKMEKRTPQEKEKY) shows a compositional bias: basic and acidic residues. Polar residues predominate over residues 291–300 (SPGFNSSHNS).

The protein belongs to the grh/CP2 family. CP2 subfamily. In terms of assembly, component of the SSP (stage selector protein) complex, which appears to be a heteromer of TFCP2 and 2 copies of NFE4.

It localises to the nucleus. In terms of biological role, may function as a transcription factor. This chain is Transcription factor CP2 (tfcp2), found in Xenopus laevis (African clawed frog).